Consider the following 73-residue polypeptide: Putative antitoxin VapB38 (73 aa).

Functionally, probable antitoxin component of a type II toxin-antitoxin (TA) system. Its putative cognate toxin is VapC38. This is Putative antitoxin VapB38 (vapB38) from Mycobacterium tuberculosis (strain ATCC 25618 / H37Rv).